Reading from the N-terminus, the 370-residue chain is 4-hydroxy-3-methylbut-2-en-1-yl diphosphate synthase (flavodoxin) (370 aa).

[4Fe-4S] cluster-binding residues include C271, C274, C306, and E313.

It belongs to the IspG family. It depends on [4Fe-4S] cluster as a cofactor.

The catalysed reaction is (2E)-4-hydroxy-3-methylbut-2-enyl diphosphate + oxidized [flavodoxin] + H2O + 2 H(+) = 2-C-methyl-D-erythritol 2,4-cyclic diphosphate + reduced [flavodoxin]. Its pathway is isoprenoid biosynthesis; isopentenyl diphosphate biosynthesis via DXP pathway; isopentenyl diphosphate from 1-deoxy-D-xylulose 5-phosphate: step 5/6. Its function is as follows. Converts 2C-methyl-D-erythritol 2,4-cyclodiphosphate (ME-2,4cPP) into 1-hydroxy-2-methyl-2-(E)-butenyl 4-diphosphate. The polypeptide is 4-hydroxy-3-methylbut-2-en-1-yl diphosphate synthase (flavodoxin) (Actinobacillus pleuropneumoniae serotype 5b (strain L20)).